We begin with the raw amino-acid sequence, 401 residues long: MTRPDLNERILSLRKLRLAQCRTRTRRTIERRNGVRLEINGSWLVEFCSNDYLGLAQHFEIIAALQDAAARNGIGATASHLICGHHAIHKALEYELAEWLGYPRALLFGSGFTANLAVQQALLTKENDICVQDRLNHASLIDATRLAGCRLRRYPHLDVDGAAHQLKNAPEGAAMLATDGIFSMDGDIAPLRALSLVARTQQALMYVDDAHGIGVTGPQGRGCIAAAWLSVEEVPLQLVTLSKALGGYGAAVLGSATLIQHLAETARPYIYTTALPPAQAAAALTAIRIARRDEWRRQRLQELVERFRENSRRHGLEIMDSETPIQPLQCGDETTTMAMSAALEREGFLVNAIRPPTVPEGKSRLRVTLSALHTTEQIDTLVQALARSRDTLATEAAPVQV.

R24 is a substrate binding site. 111–112 (GF) serves as a coordination point for pyridoxal 5'-phosphate. Position 137 (H137) interacts with substrate. The pyridoxal 5'-phosphate site is built by S183, H211, and T240. K243 carries the post-translational modification N6-(pyridoxal phosphate)lysine. T357 lines the substrate pocket.

This sequence belongs to the class-II pyridoxal-phosphate-dependent aminotransferase family. BioF subfamily. Homodimer. Requires pyridoxal 5'-phosphate as cofactor.

It catalyses the reaction 6-carboxyhexanoyl-[ACP] + L-alanine + H(+) = (8S)-8-amino-7-oxononanoate + holo-[ACP] + CO2. It functions in the pathway cofactor biosynthesis; biotin biosynthesis. Catalyzes the decarboxylative condensation of pimeloyl-[acyl-carrier protein] and L-alanine to produce 8-amino-7-oxononanoate (AON), [acyl-carrier protein], and carbon dioxide. The protein is 8-amino-7-oxononanoate synthase of Xylella fastidiosa (strain M12).